A 216-amino-acid polypeptide reads, in one-letter code: Refilin-B (216 aa).

The interval M1 to V55 is disordered. 2 positions are modified to phosphoserine: S6 and S26.

It belongs to the Refilin family. Interacts with FLNA and FLNB. As to expression, detected in various tissues, with highest expression in lung, followed by spleen.

The protein localises to the cytoplasm. It is found in the cytoskeleton. In terms of biological role, involved in the regulation of the perinuclear actin network and nuclear shape through interaction with filamins. Plays an essential role in the formation of cartilaginous skeletal elements. This Mus musculus (Mouse) protein is Refilin-B.